A 474-amino-acid chain; its full sequence is Viral protein TPX (474 aa).

The tract at residues 268-474 (VTVTPISSPS…TPTSTTSSNI (207 aa)) is disordered. Residues 275–365 (SPSPTPTPTP…PTPTPTPTPT (91 aa)) are compositionally biased toward pro residues. One copy of the Thr-Pro(N) repeat lies at 278–367 (PTPTPTPTPT…PTPTPTPTPT (90 aa)). A 3 Thr-Pro repeats regions and two near identical repeats region spans residues 278–467 (PTPTPTPTPT…PTPTPTPTPT (190 aa)). A repeat spans 368–377 (YDITYVVFDV). One copy of the Thr-Pro(N) repeat lies at 378–436 (TPSPTPTPTPTPTPTPTPTPTPTPTPTPTPTPTPTPTPTPTPTPTPTPTPTPTPTPTPT). Over residues 380 to 434 (SPTPTPTPTPTPTPTPTPTPTPTPTPTPTPTPTPTPTPTPTPTPTPTPTPTPTPT) the composition is skewed to pro residues. Residues 437-446 (YDITYVIFDV) constitute a repeat. The stretch at 447–467 (TPSPTPTPTPTPTPTPTPTPT) is one Thr-Pro(N) repeat. Pro residues predominate over residues 449–465 (SPTPTPTPTPTPTPTPT).

The protein is Viral protein TPX of Thermoproteus tenax virus 1 (strain VT3) (TTV1).